We begin with the raw amino-acid sequence, 338 residues long: D-erythrose-4-phosphate dehydrogenase (338 aa).

Residue 12–13 (RI) participates in NAD(+) binding. Substrate is bound by residues 154 to 156 (SCT), arginine 200, 213 to 214 (TK), and arginine 236. Cysteine 155 (nucleophile) is an active-site residue. NAD(+) is bound at residue asparagine 318.

The protein belongs to the glyceraldehyde-3-phosphate dehydrogenase family. Epd subfamily. Homotetramer.

It localises to the cytoplasm. It carries out the reaction D-erythrose 4-phosphate + NAD(+) + H2O = 4-phospho-D-erythronate + NADH + 2 H(+). Its pathway is cofactor biosynthesis; pyridoxine 5'-phosphate biosynthesis; pyridoxine 5'-phosphate from D-erythrose 4-phosphate: step 1/5. Its function is as follows. Catalyzes the NAD-dependent conversion of D-erythrose 4-phosphate to 4-phosphoerythronate. The polypeptide is D-erythrose-4-phosphate dehydrogenase (Tolumonas auensis (strain DSM 9187 / NBRC 110442 / TA 4)).